The chain runs to 329 residues: DNA-directed RNA polymerase subunit alpha (329 aa).

The interval 1–235 is alpha N-terminal domain (alpha-NTD); it reads MQNSIMDFLR…EQLEAFVDLR (235 aa). Residues 249–329 form an alpha C-terminal domain (alpha-CTD) region; that stretch reads FEPILLRPVD…NWPPSSILDE (81 aa).

It belongs to the RNA polymerase alpha chain family. In terms of assembly, homodimer. The RNAP catalytic core consists of 2 alpha, 1 beta, 1 beta' and 1 omega subunit. When a sigma factor is associated with the core the holoenzyme is formed, which can initiate transcription.

The catalysed reaction is RNA(n) + a ribonucleoside 5'-triphosphate = RNA(n+1) + diphosphate. Functionally, DNA-dependent RNA polymerase catalyzes the transcription of DNA into RNA using the four ribonucleoside triphosphates as substrates. The sequence is that of DNA-directed RNA polymerase subunit alpha from Buchnera aphidicola subsp. Acyrthosiphon pisum (strain APS) (Acyrthosiphon pisum symbiotic bacterium).